An 80-amino-acid polypeptide reads, in one-letter code: Large ribosomal subunit protein bL31B (80 aa).

This sequence belongs to the bacterial ribosomal protein bL31 family. Type B subfamily. As to quaternary structure, part of the 50S ribosomal subunit.

The sequence is that of Large ribosomal subunit protein bL31B from Xylella fastidiosa (strain 9a5c).